Consider the following 76-residue polypeptide: Sulfur carrier protein TusA (76 aa).

Residue Cys15 is the Cysteine persulfide intermediate of the active site.

This sequence belongs to the sulfur carrier protein TusA family. Mostly a monomer, a small portion forms homodimer via intermolecular disulfide bonds. Tightly interacts with DsrEFH.

It localises to the cytoplasm. It functions in the pathway energy metabolism; sulfur metabolism. In terms of biological role, sulfur carrier protein involved in sulfur trafficking for oxidative dissimilatory sulfur metabolism. Component of a sulfur relay system that starts with the sulfur-mobilizing rhodanese-like protein Rhd_2599 (Alvin_2599), which transfers the sulfur from a low-molecular-weight thiol, maybe glutathione, to the TusA protein (Alvin_2600); TusA serves as the sulfur donor for DsrEFH, which persulfurates DsrC; persulfurated DsrC very probably serves as a direct substrate for reverse-acting sulfite reductase, DsrAB. TusA seems to be not exclusively dedicated to sulfur oxidation and may have other important roles in the cell. Might also act as a sulfur mediator required for 2-thiouridine formation of tRNA. The protein is Sulfur carrier protein TusA of Allochromatium vinosum (strain ATCC 17899 / DSM 180 / NBRC 103801 / NCIMB 10441 / D) (Chromatium vinosum).